Consider the following 225-residue polypeptide: MADHMMAMNHSRFQDGTNGLHHPAHRMGMGQFSNHHHHPQQHTFNSLMGEHMHYGPGNINANNSIRHAIVTGNVNGGHPNGSMAPASRFNSPFMGPVPNQGAQLTASMQLQKLNNQYFTHHPYPHNHYIPELHPANQINGTNQHFRDCNPKHSTGMPPSVSHVPAAMLPPSVIDTDFIDEEVLMSLVIEMGLDRIKELPELWLGQNEFDFMTDFVCKQQPNRVSC.

It belongs to the CITED family.

The protein localises to the nucleus. Its function is as follows. Transcriptional coactivator or corepressor of the p300/CBP-mediated transcription complex. May be involved in sex determination, early gonad development, left-right patterning during embryogenesis and differentiation of the adrenal cortex. This chain is Cbp/p300-interacting transactivator 2 (cited2), found in Xenopus tropicalis (Western clawed frog).